The sequence spans 363 residues: Aminomethyltransferase (363 aa).

The protein belongs to the GcvT family. In terms of assembly, the glycine cleavage system is composed of four proteins: P, T, L and H.

The enzyme catalyses N(6)-[(R)-S(8)-aminomethyldihydrolipoyl]-L-lysyl-[protein] + (6S)-5,6,7,8-tetrahydrofolate = N(6)-[(R)-dihydrolipoyl]-L-lysyl-[protein] + (6R)-5,10-methylene-5,6,7,8-tetrahydrofolate + NH4(+). The glycine cleavage system catalyzes the degradation of glycine. This Thermotoga neapolitana (strain ATCC 49049 / DSM 4359 / NBRC 107923 / NS-E) protein is Aminomethyltransferase.